The sequence spans 353 residues: Ferredoxin--NADP reductase 1 (353 aa).

7 residues coordinate FAD: aspartate 43, glutamine 51, tyrosine 56, alanine 96, phenylalanine 135, aspartate 300, and serine 341.

This sequence belongs to the ferredoxin--NADP reductase type 2 family. As to quaternary structure, homodimer. The cofactor is FAD.

The enzyme catalyses 2 reduced [2Fe-2S]-[ferredoxin] + NADP(+) + H(+) = 2 oxidized [2Fe-2S]-[ferredoxin] + NADPH. In Cupriavidus metallidurans (strain ATCC 43123 / DSM 2839 / NBRC 102507 / CH34) (Ralstonia metallidurans), this protein is Ferredoxin--NADP reductase 1.